The following is a 1066-amino-acid chain: Allene oxide synthase-lipoxygenase protein (1066 aa).

The interval 1 to 371 (MTWKNFGFEI…LKIGSLVPAG (371 aa)) is allene oxide synthase. Tyrosine 353 contacts heme. Positions 372-1066 (QNAIYNVEVE…PERIPNGTAI (695 aa)) are arachidonate 8-lipoxygenase. A PLAT domain is found at 374–490 (AIYNVEVETG…KDMVLFPGEA (117 aa)). Positions 387, 389, 390, 391, 416, 417, 419, 452, and 454 each coordinate Ca(2+). Residues 491–1066 (TLPFNEVPAI…PERIPNGTAI (576 aa)) form the Lipoxygenase domain. Fe cation is bound by residues histidine 757, histidine 762, histidine 943, asparagine 947, and isoleucine 1066.

This sequence in the C-terminal section; belongs to the lipoxygenase family. Dimer. Requires Ca(2+) as cofactor. The cofactor is Fe cation. Heme serves as cofactor.

The protein localises to the cytoplasm. The protein resides in the membrane. The catalysed reaction is (5Z,8Z,11Z,14Z)-eicosatetraenoate + O2 = (8R)-hydroperoxy-(5Z,9E,11Z,14Z)-eicosatetraenoate. It catalyses the reaction (8R)-hydroperoxy-(5Z,9E,11Z,14Z)-eicosatetraenoate = 8,9-epoxy-(5Z,9E,11Z,14Z)-eicosatetraenoate + H2O. It carries out the reaction (5Z,8Z,11Z,14Z,17Z)-eicosapentaenoate + O2 = (8R)-hydroperoxy-(5Z,9E,11Z,14Z,17Z)-eicosapentaenoate. The enzyme catalyses (4Z,7Z,10Z,13Z,16Z,19Z)-docosahexaenoate + O2 = 10-hydroperoxy-(4Z,7Z,11E,13Z,16Z,19Z)-docosahexaenoate. The catalysed reaction is (8Z,11Z,14Z)-eicosatrienoate + O2 = (8R)-hydroperoxy-(9E,11Z,14Z)-eicosatrienoate. It catalyses the reaction (8Z,11Z,14Z)-eicosatrienoate + O2 = 10-hydroperoxy-(8Z,11Z,14Z)-eicosatrienoate. It carries out the reaction (8Z,11Z,14Z)-eicosatrienoate + O2 = 11-hydroperoxy-(8Z,12E,14Z)-eicosatrienoate. The protein operates within lipid metabolism; arachidonate metabolism. Its pathway is lipid metabolism; fatty acid metabolism. Lipoxygenase activity is stimulated by calcium, sodium, lithium and potassium ions. Calcium binding promotes interaction with membranes and thus facilitates access to substrates. Its function is as follows. Bifunctional enzyme which is responsible for allene oxide biosynthesis via a two-step reaction; first the lipoxygenase reaction that converts polyunsaturated fatty acids such as arachidonate ((5Z,8Z,11Z,14Z)-eicosatetraenoate) into a (8R)-hydroperoxide intermediate ((8R)-hydroperoxy-(5Z,9E,11Z,14Z)-eicosatetraenoate) followed by the allene oxide synthase reaction that converts the hydroperoxide intermediate ((8R)-hydroperoxy-(5Z,9E,11Z,14Z)-eicosatetraenoate) into the allene oxide (8,9-epoxy-(5Z,9E,11Z,14Z)-eicosatetraenoate). Shows preference for C20 or C22 highly polyunsaturated fatty acids and no activity with C18 fatty acids in vitro. Fatty acid allene oxides are intermediates in the formation of cyclopentenones or hydrolytic products in marine systems, most notably the prostanoid-related clavulones. This is Allene oxide synthase-lipoxygenase protein from Plexaura homomalla (Black sea rod).